Here is a 351-residue protein sequence, read N- to C-terminus: Actin maturation protease (351 aa).

Residues 1 to 19 (MTSPCSPPLKPPISPPKTP) are compositionally biased toward pro residues. Residues 1–70 (MTSPCSPPLK…PPAATGPAPR (70 aa)) are disordered. Over residues 36-50 (LDFSALPSPPWSQQT) the composition is skewed to low complexity. Positions 51-64 (PVPPPLPLPPPPAA) are enriched in pro residues. The tract at residues 124–244 (SLIQEGPQCG…WAVSAGVLLG (121 aa)) is peptidase C39-like. Cysteine 132 is an active-site residue. The residue at position 316 (serine 316) is a Phosphoserine.

Belongs to the ACTMAP family. In terms of assembly, interacts (via N-terminus) with PFN2 isoforms IIa and IIb; the interactions may facilitate efficient cleavage of the acetylated N-terminus of immature actin. Interacts with PFN1.

The protein localises to the cytoplasm. The enzyme catalyses N-terminal N(alpha)-acetyl-L-methionyl-L-aspartyl-[protein] + H2O = N-terminal L-aspartyl-[protein] + N-acetyl-L-methionine. It catalyses the reaction N-terminal N(alpha)-acetyl-L-methionyl-L-glutamyl-[protein] + H2O = N-terminal L-glutamyl-[protein] + N-acetyl-L-methionine. The catalysed reaction is N-terminal N(alpha)-acetyl-L-cysteinyl-L-aspartyl-[protein] + H2O = N-terminal L-aspartyl-[protein] + N-acetyl-L-cysteine. It carries out the reaction N-terminal N(alpha)-acetyl-L-cysteinyl-L-glutamyl-[protein] + H2O = N-terminal L-glutamyl-[protein] + N-acetyl-L-cysteine. In terms of biological role, actin maturation protease that specifically mediates the cleavage of immature acetylated N-terminal actin, thereby contributing to actin maturation. Cleaves N-terminal acetylated methionine of immature cytoplasmic beta- and gamma-actins ACTB and ACTG1 after translation. Cleaves N-terminal acetylated cysteine of muscle alpha-actins ACTA1, ACTC1 and ACTA2 after canonical removal of N-terminal methionine. The polypeptide is Actin maturation protease (Homo sapiens (Human)).